The primary structure comprises 914 residues: High affinity cAMP-specific and IBMX-insensitive 3',5'-cyclic phosphodiesterase 8 (914 aa).

Disordered stretches follow at residues 1-27 (MGCSPSTLPPAPSAGQTGERGSLPLDA) and 113-138 (RRATGSTGTSGTSSSGGNSRPGHRKS). Low complexity predominate over residues 116–129 (TGSTGTSGTSSSGG). The PAS domain maps to 312–359 (TQQALYTALHRLKEVVLITDDLLRIQYANRATERLLNMRLDEIISKQL). The region spanning 558 to 893 (TAAIVPAKMK…SQWKKYDEQG (336 aa)) is the PDEase domain. H640 functions as the Proton donor in the catalytic mechanism. A divalent metal cation is bound by residues H644, H682, D683, and D799.

The protein belongs to the cyclic nucleotide phosphodiesterase family. PDE8 subfamily. A divalent metal cation is required as a cofactor. Expressed in Malpighian tubules and head.

It catalyses the reaction 3',5'-cyclic AMP + H2O = AMP + H(+). It functions in the pathway purine metabolism; 3',5'-cyclic AMP degradation; AMP from 3',5'-cyclic AMP: step 1/1. Functionally, hydrolyzes the second messenger cAMP, which is a key regulator of many important physiological processes. Involved in the positive regulation of MAP kinase signaling and in inhibiting oxidative stress-induced cell death. This Drosophila melanogaster (Fruit fly) protein is High affinity cAMP-specific and IBMX-insensitive 3',5'-cyclic phosphodiesterase 8.